We begin with the raw amino-acid sequence, 457 residues long: ATP synthase subunit beta (457 aa).

147 to 154 (GGAGVGKT) contributes to the ATP binding site.

This sequence belongs to the ATPase alpha/beta chains family. F-type ATPases have 2 components, CF(1) - the catalytic core - and CF(0) - the membrane proton channel. CF(1) has five subunits: alpha(3), beta(3), gamma(1), delta(1), epsilon(1). CF(0) has three main subunits: a(1), b(2) and c(9-12). The alpha and beta chains form an alternating ring which encloses part of the gamma chain. CF(1) is attached to CF(0) by a central stalk formed by the gamma and epsilon chains, while a peripheral stalk is formed by the delta and b chains.

It is found in the cell inner membrane. The catalysed reaction is ATP + H2O + 4 H(+)(in) = ADP + phosphate + 5 H(+)(out). Functionally, produces ATP from ADP in the presence of a proton gradient across the membrane. The catalytic sites are hosted primarily by the beta subunits. The protein is ATP synthase subunit beta of Haemophilus influenzae (strain 86-028NP).